A 594-amino-acid chain; its full sequence is Membrane protein insertase YidC (594 aa).

Residues 7 to 27 (YFVAIALSVLILIAWQFFYVS) traverse the membrane as a helical segment. The segment at 36 to 73 (AAEQAQQAQQTQQQPGAQPAAPGQALPGGAIPSAGESR) is disordered. A compositionally biased stretch (low complexity) spans 37-65 (AEQAQQAQQTQQQPGAQPAAPGQALPGGA). 4 helical membrane passes run 369 to 389 (LFGN…LIFF), 443 to 463 (WPIL…YVTI), 488 to 508 (LFGL…WPII), and 532 to 552 (FTWM…GLVI).

Belongs to the OXA1/ALB3/YidC family. Type 1 subfamily. In terms of assembly, interacts with the Sec translocase complex via SecD. Specifically interacts with transmembrane segments of nascent integral membrane proteins during membrane integration.

Its subcellular location is the cell inner membrane. Functionally, required for the insertion and/or proper folding and/or complex formation of integral membrane proteins into the membrane. Involved in integration of membrane proteins that insert both dependently and independently of the Sec translocase complex, as well as at least some lipoproteins. Aids folding of multispanning membrane proteins. This is Membrane protein insertase YidC from Rhizobium meliloti (strain 1021) (Ensifer meliloti).